Here is a 532-residue protein sequence, read N- to C-terminus: Probable cytochrome c oxidase subunit 1 (532 aa).

Helical transmembrane passes span 33–53 (IMYI…SLLF), 74–94 (VLIT…ALFG), 95–115 (GFGN…FPRL), 118–138 (ISFW…FVDG), 163–183 (MAIF…INLI), 200–220 (PLFV…MPVL), 252–272 (LFWF…FGIV), and 284–304 (IFGY…GFIV). Fe(II)-heme a is bound at residue H79. Cu cation-binding residues include H258 and Y262. H307 and H308 together coordinate Cu cation. 2 consecutive transmembrane segments (helical) span residues 318–338 (ALIY…IKIF) and 355–375 (MLFS…GIIL). H393 contacts heme a3. The next 3 helical transmembrane spans lie at 394-414 (FHYT…YYWF), 431-451 (FWIT…LGLA), and 473-493 (IGAG…FYTL). H395 lines the Fe(II)-heme a pocket.

The protein belongs to the heme-copper respiratory oxidase family.

The protein resides in the cell membrane. The enzyme catalyses 4 Fe(II)-[cytochrome c] + O2 + 8 H(+)(in) = 4 Fe(III)-[cytochrome c] + 2 H2O + 4 H(+)(out). The protein operates within energy metabolism; oxidative phosphorylation. Functionally, cytochrome c oxidase is the component of the respiratory chain that catalyzes the reduction of oxygen to water. Subunits 1-3 form the functional core of the enzyme complex. CO I is the catalytic subunit of the enzyme. Electrons originating in cytochrome c are transferred via the copper A center of subunit 2 and heme A of subunit 1 to the bimetallic center formed by heme A3 and copper B. In Rickettsia conorii (strain ATCC VR-613 / Malish 7), this protein is Probable cytochrome c oxidase subunit 1 (ctaD).